Reading from the N-terminus, the 160-residue chain is MMPAKLQLDVLRTLQSSARHGTQTLKNSNFLERFHKDRIVFCLPFFPALFFVPVQKVLQHLCLRFTQVAPYFIIQLFDLPSRHAENLAPLLASCRIQYTNCFSSSSNGQVPSIISLYLRVDLSPFYAKIFQISYRVPMIWLDVFQVFFVFLIISQHSLHS.

A run of 2 helical transmembrane segments spans residues 39 to 59 (IVFC…KVLQ) and 136 to 156 (VPMI…ISQH).

Belongs to the UPF0479 family.

It is found in the membrane. The protein is Putative UPF0479 protein YBL113W-A of Saccharomyces cerevisiae (strain ATCC 204508 / S288c) (Baker's yeast).